The chain runs to 244 residues: Large ribosomal subunit protein uL2 (244 aa).

Composition is skewed to basic residues over residues 1-12 and 234-244; these read MGKRPLVRRRGR and KTGRARIKERK. Disordered stretches follow at residues 1 to 30 and 203 to 244; these read MGKR…TKAN and HGGG…KERK.

It belongs to the universal ribosomal protein uL2 family. As to quaternary structure, part of the 50S ribosomal subunit. Forms a bridge to the 30S subunit in the 70S ribosome.

In terms of biological role, one of the primary rRNA binding proteins. Required for association of the 30S and 50S subunits to form the 70S ribosome, for tRNA binding and peptide bond formation. It has been suggested to have peptidyltransferase activity; this is somewhat controversial. Makes several contacts with the 16S rRNA in the 70S ribosome. In Nitrosopumilus maritimus (strain SCM1), this protein is Large ribosomal subunit protein uL2.